Consider the following 34-residue polypeptide: Thermomycolin (34 aa).

The Charge relay system role is filled by Ser-33.

The protein belongs to the peptidase S8 family.

The protein localises to the secreted. The catalysed reaction is Rather non-specific hydrolysis of proteins. Preferential cleavage: -Ala-|-Xaa-, -Tyr-|-Xaa-, -Phe-|-Xaa- in small molecular substrates.. Functionally, this is an extracellular proteinase with a general specificity for apolar residues. In Malbranchea cinnamomea (Thermophilic fungus), this protein is Thermomycolin.